We begin with the raw amino-acid sequence, 337 residues long: Diacylglycerol acyltransferase/mycolyltransferase Ag85A (337 aa).

A signal peptide spans methionine 1–serine 42. Residue methionine 85–arginine 86 coordinates substrate. The tract at residues phenylalanine 101 to valine 111 is fibronectin-binding. Cysteine 130 and cysteine 135 are disulfide-bonded. Positions 169 and 197 each coordinate substrate. Serine 169 serves as the catalytic Nucleophile. Residue glutamate 273 is part of the active site. Substrate is bound by residues phenylalanine 275 to threonine 278, lysine 282, and histidine 305 to tryptophan 307. Histidine 305 is a catalytic residue.

The protein belongs to the mycobacterial A85 antigen family. As to quaternary structure, homodimer.

It localises to the secreted. It is found in the cell wall. The protein resides in the cytoplasm. It catalyses the reaction an acyl-CoA + a 1,2-diacyl-sn-glycerol = a triacyl-sn-glycerol + CoA. The catalysed reaction is 2 alpha,alpha'-trehalose 6-mycolate = alpha,alpha'-trehalose 6,6'-bismycolate + alpha,alpha-trehalose. Its function is as follows. The antigen 85 proteins (FbpA, FbpB, FbpC) are responsible for the high affinity of mycobacteria for fibronectin, a large adhesive glycoprotein, which facilitates the attachment of M.tuberculosis to murine alveolar macrophages (AMs). They also help to maintain the integrity of the cell wall by catalyzing the transfer of mycolic acids to cell wall arabinogalactan, and through the synthesis of alpha,alpha-trehalose dimycolate (TDM, cord factor). They catalyze the transfer of a mycoloyl residue from one molecule of alpha,alpha-trehalose monomycolate (TMM) to another TMM, leading to the formation of TDM. FbpA mediates triacylglycerol (TAG) formation with long-chain acyl-CoA as the acyl donor and 1,2-dipalmitoyl-sn-glycerol (1,2-dipalmitin) as the acyl acceptor. It has a preference for C26:0-CoA over C18:1-CoA. This Mycobacterium ulcerans protein is Diacylglycerol acyltransferase/mycolyltransferase Ag85A (fbpA).